Reading from the N-terminus, the 379-residue chain is MIDYEVLRFIWWLLVGVLLIGFAVTDGFDMGVGMLTRFLGRNDTERRIMINSIAPHWDGNQVWLITAGGALFAAWPMVYAAAFSGFYVAMILVLASLFFRPVGFDYRSKIEETRWRNMWDWGIFIGSFVPPLVIGVAFGNLLQGVPFNVDEYLRLYYTGNFFQLLNPFGLLAGVVSVGMIITQGATYLQMRTVGELHLRTRATAQVAALVTLVCFALAGVWVMYGIDGYVVKSTMDHYAASNPLNKEVVREAGAWLVNFNNTPILWAIPALGVVLPLLTILTARMDKAAWAFVFSSLTLACIILTAGIAMFPFVMPSSTMMNASLTMWDATSSQLTLNVMTWVAVVLVPIILLYTAWCYWKMFGRITKEDIERNTHSLY.

Met-1 is modified (N-formylmethionine). At 1 to 8 (MIDYEVLR) the chain is on the cytoplasmic side. The helical transmembrane segment at 9-28 (FIWWLLVGVLLIGFAVTDGF) threads the bilayer. Residues 29–79 (DMGVGMLTRFLGRNDTERRIMINSIAPHWDGNQVWLITAGGALFAAWPMVY) lie on the Periplasmic side of the membrane. A helical membrane pass occupies residues 80–99 (AAAFSGFYVAMILVLASLFF). At 100–122 (RPVGFDYRSKIEETRWRNMWDWG) the chain is on the cytoplasmic side. Residues 123–142 (IFIGSFVPPLVIGVAFGNLL) traverse the membrane as a helical segment. The Periplasmic segment spans residues 143-164 (QGVPFNVDEYLRLYYTGNFFQL). A helical membrane pass occupies residues 165 to 184 (LNPFGLLAGVVSVGMIITQG). Topologically, residues 185-205 (ATYLQMRTVGELHLRTRATAQ) are cytoplasmic. A helical transmembrane segment spans residues 206 to 225 (VAALVTLVCFALAGVWVMYG). Topologically, residues 226-262 (IDGYVVKSTMDHYAASNPLNKEVVREAGAWLVNFNNT) are periplasmic. Residues 263–282 (PILWAIPALGVVLPLLTILT) form a helical membrane-spanning segment. The Cytoplasmic portion of the chain corresponds to 283–292 (ARMDKAAWAF). Residues 293-312 (VFSSLTLACIILTAGIAMFP) form a helical membrane-spanning segment. Residues 313–336 (FVMPSSTMMNASLTMWDATSSQLT) are Periplasmic-facing. A helical transmembrane segment spans residues 337-356 (LNVMTWVAVVLVPIILLYTA). At 357–379 (WCYWKMFGRITKEDIERNTHSLY) the chain is on the cytoplasmic side.

It belongs to the cytochrome ubiquinol oxidase subunit 2 family. As to quaternary structure, heterodimer of subunits I and II. Requires heme b as cofactor. It depends on heme d cis-diol as a cofactor.

The protein resides in the cell inner membrane. It carries out the reaction 2 a ubiquinol + O2(in) + 4 H(+)(in) = 2 a ubiquinone + 2 H2O(in) + 4 H(+)(out). Its pathway is energy metabolism; oxidative phosphorylation. Its function is as follows. A terminal oxidase that produces a proton motive force by the vectorial transfer of protons across the inner membrane. It is the component of the aerobic respiratory chain of E.coli that predominates when cells are grown at low aeration. Generates a proton motive force using protons and electrons from opposite sides of the membrane to generate H(2)O, transferring 1 proton/electron. This chain is Cytochrome bd-I ubiquinol oxidase subunit 2 (cydB), found in Escherichia coli O157:H7.